A 359-amino-acid polypeptide reads, in one-letter code: Histidinol-phosphate aminotransferase (359 aa).

K217 carries the N6-(pyridoxal phosphate)lysine modification.

It belongs to the class-II pyridoxal-phosphate-dependent aminotransferase family. Histidinol-phosphate aminotransferase subfamily. Homodimer. Pyridoxal 5'-phosphate is required as a cofactor.

It catalyses the reaction L-histidinol phosphate + 2-oxoglutarate = 3-(imidazol-4-yl)-2-oxopropyl phosphate + L-glutamate. It participates in amino-acid biosynthesis; L-histidine biosynthesis; L-histidine from 5-phospho-alpha-D-ribose 1-diphosphate: step 7/9. The chain is Histidinol-phosphate aminotransferase from Salmonella choleraesuis (strain SC-B67).